Consider the following 185-residue polypeptide: Der GTPase-activating protein YihI (185 aa).

Disordered stretches follow at residues 1–74 (MGRS…KKKI) and 145–169 (EPED…SSDE). The segment covering 23–33 (NRSESDVEGRE) has biased composition (basic and acidic residues). The span at 34–47 (RKRVKKRKGLKSGS) shows a compositional bias: basic residues. Positions 48–68 (RHSDGSEAKQRKAALARDPRL) are enriched in basic and acidic residues. The span at 145–155 (EPEDDEEEIFE) shows a compositional bias: acidic residues.

This sequence belongs to the YihI family. Interacts with Der.

In terms of biological role, a GTPase-activating protein (GAP) that modifies Der/EngA GTPase function. May play a role in ribosome biogenesis. The sequence is that of Der GTPase-activating protein YihI from Vibrio atlanticus (strain LGP32) (Vibrio splendidus (strain Mel32)).